A 98-amino-acid polypeptide reads, in one-letter code: Co-chaperonin GroES (98 aa).

This sequence belongs to the GroES chaperonin family. As to quaternary structure, heptamer of 7 subunits arranged in a ring. Interacts with the chaperonin GroEL.

The protein localises to the cytoplasm. Functionally, together with the chaperonin GroEL, plays an essential role in assisting protein folding. The GroEL-GroES system forms a nano-cage that allows encapsulation of the non-native substrate proteins and provides a physical environment optimized to promote and accelerate protein folding. GroES binds to the apical surface of the GroEL ring, thereby capping the opening of the GroEL channel. The chain is Co-chaperonin GroES from Leifsonia xyli subsp. xyli (strain CTCB07).